Consider the following 442-residue polypeptide: Hydroxycinnamoyltransferase 1 (442 aa).

Active-site proton acceptor residues include His-159 and Asp-389.

This sequence belongs to the plant acyltransferase family. As to expression, expressed in roots, leaves, stems and seeds.

Its function is as follows. Hydroxycinnamoyl transferase that catalyzes the transfer of an acyl from p-coumaryol-CoA to various acyl acceptors. Can use feruloyl-CoA and caffeoyl-CoA as acyl donors. In Oryza sativa subsp. japonica (Rice), this protein is Hydroxycinnamoyltransferase 1.